The sequence spans 723 residues: Transient receptor potential cation channel subfamily V member 5 (723 aa).

Over 1–320 (MGVKKPWIQL…SLKWKKYGQP (320 aa)) the chain is Cytoplasmic. 5 ANK repeats span residues 72-101 (LGETALHVAALYDNLDAAIMLMETAPYLVT), 110-139 (VGQTALHIAIMNQNVNLVRALLARGASASA), 156-185 (YGEHPLSFAACVGSEEIVRLLIEHGADIRA), 189-222 (LGNTVLHILVLQPNKTFACQMYNLLLSHDGGDHL), and 232-261 (QGLTPFKLAGVEGNTVMFQHLMQKRKHIQW). The helical transmembrane segment at 321–341 (YFCLLGMLYIFYMICFTTCCV) threads the bilayer. The Extracellular segment spans residues 342 to 378 (YRPLKFRDANRTHVRDNTVLEQKPLQEAYVTYQDKVR). N-linked (GlcNAc...) asparagine glycosylation occurs at Asn-351. Residues 379–401 (LVGELVTVIGAVVILLIEIPDIF) traverse the membrane as a helical segment. Residues 402–412 (RVGASRYFGHT) are Cytoplasmic-facing. Residues 413–435 (VLGGPFHVIIITYASLVLLIMVM) traverse the membrane as a helical segment. The Extracellular portion of the chain corresponds to 436 to 441 (RLTSMN). Residues 442–462 (GEVVPISMALVLGWCSVMYFS) form a helical membrane-spanning segment. At 463–485 (RGFQMLGPFTIMIQKMIFGDLLR) the chain is on the cytoplasmic side. Residues 486-506 (FCWLMAMVILGFASAFYIIFQ) form a helical membrane-spanning segment. Positions 517–537 (SDYPTAMFSTFELFLTIIDGP) form an intramembrane region, pore-forming. Asp-535 contacts Ca(2+). Residues 550–570 (LTYFAFAIIATLLMLNLFIAM) form a helical membrane-spanning segment. Over 571-723 (MGDTHWRVAQ…EGDGEEIYHF (153 aa)) the chain is Cytoplasmic. The segment at 591–595 (VATTV) is interaction with S100A10. Residues 643-646 (AFKS) form an involved in Ca(2+)-dependent inactivation region. Residues 651–674 (EVQEQLSEKQPSGTETGTLARGSV) form a disordered region. A compositionally biased stretch (polar residues) spans 654–667 (EQLSEKQPSGTETG). Thr-678 carries the post-translational modification Phosphothreonine. Ser-682 carries the phosphoserine modification. The interval 693-723 (RGWEILRRNTLGHLNLGQDLGEGDGEEIYHF) is involved in Ca(2+)-dependent inactivation.

The protein belongs to the transient receptor (TC 1.A.4) family. TrpV subfamily. TRPV5 sub-subfamily. As to quaternary structure, homotetramer and probably heterotetramer with TRPV6. Interacts with TRPV6. Interacts with S100A10 and probably with the ANAX2-S100A10 heterotetramer. The interaction with S100A10 is required for the trafficking to the plasma membrane. Interacts with calmodulin. Interacts with BSPRY, which results in its inactivation. Glycosylated. In terms of tissue distribution, detected in kidney (at protein level). Detected in kidney.

It localises to the cell membrane. Its subcellular location is the apical cell membrane. It carries out the reaction Ca(2+)(in) = Ca(2+)(out). Its activity is regulated as follows. Activated by WNK3. In terms of biological role, constitutively active calcium selective cation channel thought to be involved in Ca(2+) reabsorption in kidney and intestine. Required for normal Ca(2+) reabsorption in the kidney distal convoluted tubules. The channel is activated by low internal calcium level and the current exhibits an inward rectification. A Ca(2+)-dependent feedback regulation includes fast channel inactivation and slow current decay. Heteromeric assembly with TRPV6 seems to modify channel properties. TRPV5-TRPV6 heteromultimeric concatemers exhibit voltage-dependent gating. In Rattus norvegicus (Rat), this protein is Transient receptor potential cation channel subfamily V member 5 (Trpv5).